The sequence spans 211 residues: Pyridoxine/pyridoxamine 5'-phosphate oxidase (211 aa).

Substrate contacts are provided by residues arginine 7–tyrosine 10 and lysine 65. FMN-binding positions include arginine 60–lysine 65, phenylalanine 75–threonine 76, arginine 81, and lysine 82. Substrate contacts are provided by tyrosine 122, arginine 126, and serine 130. Residues glutamine 139–serine 140 and tryptophan 183 each bind FMN. Arginine 189–histidine 191 is a substrate binding site. Position 193 (arginine 193) interacts with FMN.

The protein belongs to the pyridoxamine 5'-phosphate oxidase family. Homodimer. Requires FMN as cofactor.

It carries out the reaction pyridoxamine 5'-phosphate + O2 + H2O = pyridoxal 5'-phosphate + H2O2 + NH4(+). It catalyses the reaction pyridoxine 5'-phosphate + O2 = pyridoxal 5'-phosphate + H2O2. Its pathway is cofactor metabolism; pyridoxal 5'-phosphate salvage; pyridoxal 5'-phosphate from pyridoxamine 5'-phosphate: step 1/1. It functions in the pathway cofactor metabolism; pyridoxal 5'-phosphate salvage; pyridoxal 5'-phosphate from pyridoxine 5'-phosphate: step 1/1. Functionally, catalyzes the oxidation of either pyridoxine 5'-phosphate (PNP) or pyridoxamine 5'-phosphate (PMP) into pyridoxal 5'-phosphate (PLP). The protein is Pyridoxine/pyridoxamine 5'-phosphate oxidase of Janthinobacterium sp. (strain Marseille) (Minibacterium massiliensis).